We begin with the raw amino-acid sequence, 289 residues long: NAD(P)H-hydrate epimerase (289 aa).

The YjeF N-terminal domain maps to 71-277 (AQTIDNELMS…SIVEKYNLKI (207 aa)). (6S)-NADPHX is bound at residue 122 to 126 (NNGGD). Asn123 and Asp185 together coordinate K(+). Residues 189 to 195 (GFSFRGE) and Asp218 each bind (6S)-NADPHX. Ser221 lines the K(+) pocket.

Belongs to the NnrE/AIBP family. It depends on K(+) as a cofactor.

The enzyme catalyses (6R)-NADHX = (6S)-NADHX. It carries out the reaction (6R)-NADPHX = (6S)-NADPHX. Catalyzes the epimerization of the S- and R-forms of NAD(P)HX, a damaged form of NAD(P)H that is a result of enzymatic or heat-dependent hydration. This is a prerequisite for the S-specific NAD(P)H-hydrate dehydratase to allow the repair of both epimers of NAD(P)HX. In Plasmodium knowlesi (strain H), this protein is NAD(P)H-hydrate epimerase.